The chain runs to 110 residues: Large ribosomal subunit protein uL22 (110 aa).

This sequence belongs to the universal ribosomal protein uL22 family. In terms of assembly, part of the 50S ribosomal subunit.

In terms of biological role, this protein binds specifically to 23S rRNA; its binding is stimulated by other ribosomal proteins, e.g. L4, L17, and L20. It is important during the early stages of 50S assembly. It makes multiple contacts with different domains of the 23S rRNA in the assembled 50S subunit and ribosome. Functionally, the globular domain of the protein is located near the polypeptide exit tunnel on the outside of the subunit, while an extended beta-hairpin is found that lines the wall of the exit tunnel in the center of the 70S ribosome. The polypeptide is Large ribosomal subunit protein uL22 (Glaesserella parasuis serovar 5 (strain SH0165) (Haemophilus parasuis)).